Here is a 538-residue protein sequence, read N- to C-terminus: Chaperonin GroEL (538 aa).

Residues 29–32, 86–90, G413, 476–478, and D492 each bind ATP; these read TIGP, DGTTT, and NAA.

The protein belongs to the chaperonin (HSP60) family. As to quaternary structure, forms a cylinder of 14 subunits composed of two heptameric rings stacked back-to-back. Interacts with the co-chaperonin GroES.

Its subcellular location is the cytoplasm. It carries out the reaction ATP + H2O + a folded polypeptide = ADP + phosphate + an unfolded polypeptide.. Together with its co-chaperonin GroES, plays an essential role in assisting protein folding. The GroEL-GroES system forms a nano-cage that allows encapsulation of the non-native substrate proteins and provides a physical environment optimized to promote and accelerate protein folding. This Staphylococcus aureus (strain MRSA252) protein is Chaperonin GroEL.